The chain runs to 164 residues: Transcriptional regulator MraZ (164 aa).

SpoVT-AbrB domains lie at 7–60 (HFTN…EIDE) and 83–126 (SEIL…EPGR). Residues 141–164 (LRKQLSSRPVAPDAQPPRPHGARE) are disordered. Over residues 154–164 (AQPPRPHGARE) the composition is skewed to pro residues.

It belongs to the MraZ family. In terms of assembly, forms oligomers.

It is found in the cytoplasm. It localises to the nucleoid. In Beijerinckia indica subsp. indica (strain ATCC 9039 / DSM 1715 / NCIMB 8712), this protein is Transcriptional regulator MraZ.